A 353-amino-acid chain; its full sequence is Ferredoxin--NADP reductase 1 (353 aa).

FAD is bound by residues Asp43, Gln51, Tyr56, Ala96, Phe135, Asp300, and Ser341.

It belongs to the ferredoxin--NADP reductase type 2 family. Homodimer. It depends on FAD as a cofactor.

It catalyses the reaction 2 reduced [2Fe-2S]-[ferredoxin] + NADP(+) + H(+) = 2 oxidized [2Fe-2S]-[ferredoxin] + NADPH. The sequence is that of Ferredoxin--NADP reductase 1 from Cupriavidus metallidurans (strain ATCC 43123 / DSM 2839 / NBRC 102507 / CH34) (Ralstonia metallidurans).